The chain runs to 1296 residues: ABC transporter B family member 21 (1296 aa).

The segment at 1 to 59 is disordered; sequence MDSVIESEEGLKVDSPNRADAETSNSKIHEEDEKELKTESDLKEEKKKTEKNKQEEDEK. The span at 9-59 shows a compositional bias: basic and acidic residues; the sequence is EGLKVDSPNRADAETSNSKIHEEDEKELKTESDLKEEKKKTEKNKQEEDEK. A helical transmembrane segment spans residues 77–97; it reads IILMILGTIGAVGNGLGFPIM. The ABC transmembrane type-1 1 domain maps to 80–368; the sequence is MILGTIGAVG…ASPCLSAFAA (289 aa). A glycan (N-linked (GlcNAc...) asparagine) is linked at asparagine 113. Transmembrane regions (helical) follow at residues 128–148, 205–225, 227–247, 307–327, and 336–356; these read FVYLGLGTLVAALLQVSGWMI, IQLVSTFIGGFVIAFTEGWLL, LVMVSSIPLLVMSGAALAIVI, GLGLGTLNIVIFCTYALAVWY, and GYTGGQVLIIIFAVLTGSMSL. The ABC transporter 1 domain occupies 403–639; the sequence is IELNNVNFSY…PEGAYSQLIR (237 aa). The N-linked (GlcNAc...) asparagine glycan is linked to asparagine 409. Residue 438–445 coordinates ATP; it reads GQSGSGKS. Residues asparagine 505, asparagine 519, and asparagine 590 are each glycosylated (N-linked (GlcNAc...) asparagine). Residues 640-662 show a composition bias toward basic and acidic residues; the sequence is LQEDTKQTEDSTDEQKLSMESMK. The disordered stretch occupies residues 640 to 672; it reads LQEDTKQTEDSTDEQKLSMESMKRSSLRKSSLS. A phosphoserine mark is found at serine 657 and serine 660. An ABC transmembrane type-1 2 domain is found at 730–1017; that stretch reads LILGSIAAVL…SSSLSPDSSK (288 aa). 2 consecutive transmembrane segments (helical) span residues 731-751 and 774-794; these read ILGSIAAVLNGVILPIFGILI and IIFMLLGVASMVVFPAQTIFF. An N-linked (GlcNAc...) asparagine glycan is attached at asparagine 826. Transmembrane regions (helical) follow at residues 865–885, 952–972, and 986–1006; these read VIAFVASWQLAFIVLAMLPLI, GIVSGIGFGVSFFVLFSSYAA, and TTFDSVFRVFFALTMAAVAIS. In terms of domain architecture, ABC transporter 2 spans 1052–1289; sequence IELRHISFKY…KDGVYASLVQ (238 aa). 1087-1094 is an ATP binding site; the sequence is GESGSGKS. N-linked (GlcNAc...) asparagine glycosylation is found at asparagine 1141 and asparagine 1240.

The protein belongs to the ABC transporter superfamily. ABCB family. Multidrug resistance exporter (TC 3.A.1.201) subfamily.

The protein resides in the membrane. The sequence is that of ABC transporter B family member 21 (ABCB21) from Arabidopsis thaliana (Mouse-ear cress).